Here is a 381-residue protein sequence, read N- to C-terminus: 40-kDa huntingtin-associated protein (381 aa).

N-acetylalanine is present on Ala2. The Nuclear localization signal motif lies at 34–36; it reads KKR. Residues 213–260 are disordered; it reads EHGGHPVQQPELPQQLPSVPQPSLPGPQPRPVLGSTLPLPLPPDHAPG. The segment covering 218 to 230 has biased composition (low complexity); it reads PVQQPELPQQLPS. Residues 231-242 show a composition bias toward pro residues; that stretch reads VPQPSLPGPQPR.

As to quaternary structure, interacts with HTT (via C-terminus). Interacts with RAB5A. Found in a complex with F8A1/F8A2/F8A3, HTT and RAB5A; mediates the recruitment of HTT by RAB5A onto early endosomes.

The protein localises to the cytoplasm. The protein resides in the nucleus. It is found in the early endosome. Its subcellular location is the nuclear body. Its function is as follows. RAB5A effector molecule that is involved in vesicular trafficking of early endosomes. Mediates the recruitment of HTT by RAB5A onto early endosomes. The HTT-F8A1/F8A2/F8A3-RAB5A complex stimulates early endosomal interaction with actin filaments and inhibits interaction with microtubules, leading to the reduction of endosome motility. This chain is 40-kDa huntingtin-associated protein (F8a1), found in Rattus norvegicus (Rat).